The primary structure comprises 207 residues: Fibroblast growth factor 18 (207 aa).

Residues 1–27 (MYSAPSTCTCLCLHFLLLCFQVQVLAA) form the signal peptide. Asn39 carries an N-linked (GlcNAc...) asparagine glycan. Cysteines 109 and 127 form a disulfide. N-linked (GlcNAc...) asparagine glycosylation occurs at Asn137.

Belongs to the heparin-binding growth factors family. Interacts with FGFR3 and FGFR4.

The protein resides in the secreted. Its function is as follows. Plays an important role in the regulation of cell proliferation, cell differentiation and cell migration. Required for normal ossification and bone development. Stimulates hepatic and intestinal proliferation. In Bos taurus (Bovine), this protein is Fibroblast growth factor 18 (FGF18).